The chain runs to 608 residues: Chaperone protein HtpG (608 aa).

The segment at 1–332 (MQFQTEVNQL…VEDLPLNVSR (332 aa)) is a; substrate-binding. Positions 333 to 536 (EILQENQILK…KNKPDFAMQQ (204 aa)) are b. Residues 537 to 608 (LLKQMGQEQN…LTKIINKAFS (72 aa)) form a c region.

Belongs to the heat shock protein 90 family. Homodimer.

It localises to the cytoplasm. Its function is as follows. Molecular chaperone. Has ATPase activity. The protein is Chaperone protein HtpG of Campylobacter jejuni (strain RM1221).